A 272-amino-acid chain; its full sequence is Phosphoglycolate phosphatase (272 aa).

D19 acts as the Nucleophile in catalysis. Residues D19, D21, and D182 each contribute to the Mg(2+) site.

This sequence belongs to the HAD-like hydrolase superfamily. CbbY/CbbZ/Gph/YieH family. Requires Mg(2+) as cofactor.

It carries out the reaction 2-phosphoglycolate + H2O = glycolate + phosphate. The protein operates within organic acid metabolism; glycolate biosynthesis; glycolate from 2-phosphoglycolate: step 1/1. In terms of biological role, specifically catalyzes the dephosphorylation of 2-phosphoglycolate. Is involved in the dissimilation of the intracellular 2-phosphoglycolate formed during the DNA repair of 3'-phosphoglycolate ends, a major class of DNA lesions induced by oxidative stress. The polypeptide is Phosphoglycolate phosphatase (Pseudomonas syringae pv. tomato (strain ATCC BAA-871 / DC3000)).